The following is a 319-amino-acid chain: Protein-methionine-sulfoxide reductase catalytic subunit MsrP (319 aa).

The segment at residues 1–40 is a signal peptide (tat-type signal); it reads MHKLNENDVTPEHIFFERRKIIQSMGLMGAASLLPRFSLA. Mo-molybdopterin contacts are provided by residues asparagine 73, 76–77, cysteine 131, threonine 166, asparagine 218, arginine 223, and 234–236; these read YE and NIK.

This sequence belongs to the MsrP family. In terms of assembly, heterodimer of a catalytic subunit (MsrP) and a heme-binding subunit (MsrQ). Mo-molybdopterin is required as a cofactor. Post-translationally, predicted to be exported by the Tat system. The position of the signal peptide cleavage has not been experimentally proven.

The protein resides in the periplasm. It catalyses the reaction L-methionyl-[protein] + a quinone + H2O = L-methionyl-(S)-S-oxide-[protein] + a quinol. The enzyme catalyses L-methionyl-[protein] + a quinone + H2O = L-methionyl-(R)-S-oxide-[protein] + a quinol. Part of the MsrPQ system that repairs oxidized periplasmic proteins containing methionine sulfoxide residues (Met-O), using respiratory chain electrons. Thus protects these proteins from oxidative-stress damage caused by reactive species of oxygen and chlorine generated by the host defense mechanisms. MsrPQ is essential for the maintenance of envelope integrity under bleach stress, rescuing a wide series of structurally unrelated periplasmic proteins from methionine oxidation. The catalytic subunit MsrP is non-stereospecific, being able to reduce both (R-) and (S-) diastereoisomers of methionine sulfoxide. This chain is Protein-methionine-sulfoxide reductase catalytic subunit MsrP, found in Pasteurella multocida (strain Pm70).